A 150-amino-acid polypeptide reads, in one-letter code: D-aminoacyl-tRNA deacylase (150 aa).

Positions 136–137 (GP) match the Gly-cisPro motif, important for rejection of L-amino acids motif.

Belongs to the DTD family. Homodimer.

Its subcellular location is the cytoplasm. It catalyses the reaction glycyl-tRNA(Ala) + H2O = tRNA(Ala) + glycine + H(+). The catalysed reaction is a D-aminoacyl-tRNA + H2O = a tRNA + a D-alpha-amino acid + H(+). An aminoacyl-tRNA editing enzyme that deacylates mischarged D-aminoacyl-tRNAs. Also deacylates mischarged glycyl-tRNA(Ala), protecting cells against glycine mischarging by AlaRS. Acts via tRNA-based rather than protein-based catalysis; rejects L-amino acids rather than detecting D-amino acids in the active site. By recycling D-aminoacyl-tRNA to D-amino acids and free tRNA molecules, this enzyme counteracts the toxicity associated with the formation of D-aminoacyl-tRNA entities in vivo and helps enforce protein L-homochirality. In Staphylococcus saprophyticus subsp. saprophyticus (strain ATCC 15305 / DSM 20229 / NCIMB 8711 / NCTC 7292 / S-41), this protein is D-aminoacyl-tRNA deacylase.